Consider the following 320-residue polypeptide: MIKRIGVLTSGGDAPGMNAAIRGVVRTALSRNLEVFGIYDGYLGLYENRMILLDRYSVSDIINKGGTFLGSARFSNFFKKDIRSIAIKNMQQRNIDFLVVIGGDGSYVGAQKLTEMGFPCISIPGTIDNDVAGTDYTIGYFTALETVVEAIDRLRDTSSSHQRISIVEVMGRNCGDLTLSAAIAGGCEFIVLPEIEFTKEELVKEIKNGIKKGKKHAIVAITEYICNVEKLAKYIQRETCRETRATILGHIQRGGAPVVYDRILASRMGEYSVDILLQGFQGRCIGTINEKMVHHDISDALKNMKRPFKFDWLKTAKQLY.

Gly12 contributes to the ATP binding site. Residues 22-26 (RGVVR) and 55-60 (RYSVSD) each bind ADP. Residues 73-74 (RF) and 103-106 (GDGS) contribute to the ATP site. Asp104 is a binding site for Mg(2+). 126 to 128 (TID) contacts substrate. The active-site Proton acceptor is the Asp128. Arg155 serves as a coordination point for ADP. Substrate is bound by residues Arg163 and 170 to 172 (MGR). Residues 186–188 (GCE), Lys212, and 214–216 (KKH) each bind ADP. Substrate contacts are provided by residues Glu223, Arg244, and 250–253 (HIQR).

Belongs to the phosphofructokinase type A (PFKA) family. ATP-dependent PFK group I subfamily. Prokaryotic clade 'B1' sub-subfamily. As to quaternary structure, homotetramer. Mg(2+) serves as cofactor.

The protein localises to the cytoplasm. The catalysed reaction is beta-D-fructose 6-phosphate + ATP = beta-D-fructose 1,6-bisphosphate + ADP + H(+). Its pathway is carbohydrate degradation; glycolysis; D-glyceraldehyde 3-phosphate and glycerone phosphate from D-glucose: step 3/4. With respect to regulation, allosterically activated by ADP and other diphosphonucleosides, and allosterically inhibited by phosphoenolpyruvate. Its function is as follows. Catalyzes the phosphorylation of D-fructose 6-phosphate to fructose 1,6-bisphosphate by ATP, the first committing step of glycolysis. This is ATP-dependent 6-phosphofructokinase from Buchnera aphidicola subsp. Baizongia pistaciae (strain Bp).